Consider the following 269-residue polypeptide: 4-hydroxy-tetrahydrodipicolinate reductase (269 aa).

G11–M16 is an NAD(+) binding site. K39 is an NADP(+) binding site. Residues G101 to T103 and A125 to F128 contribute to the NAD(+) site. Residue H158 is the Proton donor/acceptor of the active site. H159 contributes to the (S)-2,3,4,5-tetrahydrodipicolinate binding site. Residue K162 is the Proton donor of the active site. G168–T169 provides a ligand contact to (S)-2,3,4,5-tetrahydrodipicolinate.

This sequence belongs to the DapB family. As to quaternary structure, homotetramer.

Its subcellular location is the cytoplasm. The catalysed reaction is (S)-2,3,4,5-tetrahydrodipicolinate + NAD(+) + H2O = (2S,4S)-4-hydroxy-2,3,4,5-tetrahydrodipicolinate + NADH + H(+). It carries out the reaction (S)-2,3,4,5-tetrahydrodipicolinate + NADP(+) + H2O = (2S,4S)-4-hydroxy-2,3,4,5-tetrahydrodipicolinate + NADPH + H(+). The protein operates within amino-acid biosynthesis; L-lysine biosynthesis via DAP pathway; (S)-tetrahydrodipicolinate from L-aspartate: step 4/4. Catalyzes the conversion of 4-hydroxy-tetrahydrodipicolinate (HTPA) to tetrahydrodipicolinate. The polypeptide is 4-hydroxy-tetrahydrodipicolinate reductase (Buchnera aphidicola subsp. Acyrthosiphon pisum (strain 5A)).